The chain runs to 1489 residues: ABC transporter FUM19 (1489 aa).

10 helical membrane passes run 33 to 53 (IIFFIAPSCVFTALTFVRIFV), 84 to 104 (CFSSSQVLGLVAGMTTAALSY), 116 to 136 (LLSIYLFLSLLLDIAHDRTLW), 143 to 163 (LEYGFSSVFSAAVAIKAFAVW), 264 to 284 (LLLPVLPRIALIGLSLAQAFL), 302 to 322 (WGLIGATVLIYGGISICTSLY), 373 to 393 (FLNLHELWANIVEAGLAAWFL), 397 to 417 (VGIAFIAPIGLVLLSFLGVSI), 482 to 502 (IASLIIAFAPDLTAPGIMLAA), and 511 to 531 (HKVYTAIALLTLLTVPLGSIF). An ABC transmembrane type-1 1 domain is found at 272 to 539 (IALIGLSLAQ…IFRSVSPLMS (268 aa)). Residues 591-823 (VKVIQASFGW…YQSHLQSLCI (233 aa)) enclose the ABC transporter 1 domain. Residues Asn612 and Asn616 are each glycosylated (N-linked (GlcNAc...) asparagine). Position 625 to 632 (625 to 632 (GPVGSGKS)) interacts with ATP. An N-linked (GlcNAc...) asparagine glycan is attached at Asn670. The span at 852–862 (EQTRSSRRGAD) shows a compositional bias: basic and acidic residues. The disordered stretch occupies residues 852-874 (EQTRSSRRGADNQETIASGADSS). The span at 863-874 (NQETIASGADSS) shows a compositional bias: polar residues. The next 6 membrane-spanning stretches (helical) occupy residues 890–910 (AVPPVAIISFVTSSLSYGFLY), 945–965 (ILALLSELLTMYLALTYFALI), 977–999 (AITRAPLYFFASVDLGTITNYFS), 1031–1051 (AASSPYLAASYPLCFFLLYFV), 1120–1140 (WLLFILNTFVSLLALFTVALV), and 1149–1169 (GFAGAGLISLMQIGQFLTNVV). One can recognise an ABC transmembrane type-1 2 domain in the interval 902–1187 (SSLSYGFLYS…SMGAVSRLKA (286 aa)). The ABC transporter 2 domain occupies 1214–1485 (IKIDGVSASY…KEGKFRALWE (272 aa)). An ATP-binding site is contributed by 1254–1261 (GRTGSGKS).

The protein belongs to the ABC transporter superfamily. ABCC family. Conjugate transporter (TC 3.A.1.208) subfamily.

It localises to the cell membrane. Its function is as follows. ABC transporter that may provide the dual role of fumonisin export and self-protection by allowing the fungus to evade the harmful effect of its own fumonisin production. Plays a role in the repression of the gene cluster that mediates fumonisin biosynthesis. This Gibberella moniliformis (strain M3125 / FGSC 7600) (Maize ear and stalk rot fungus) protein is ABC transporter FUM19.